The chain runs to 429 residues: 3-phosphoshikimate 1-carboxyvinyltransferase (429 aa).

Positions 25, 26, and 30 each coordinate 3-phosphoshikimate. Residue Lys-25 participates in phosphoenolpyruvate binding. The phosphoenolpyruvate site is built by Gly-99 and Arg-127. Residues Ser-173, Ser-174, Gln-175, Ser-201, Asp-317, Asn-340, and Lys-344 each contribute to the 3-phosphoshikimate site. Phosphoenolpyruvate is bound at residue Gln-175. Asp-317 serves as the catalytic Proton acceptor. Phosphoenolpyruvate is bound by residues Arg-348, Arg-390, and Lys-415.

This sequence belongs to the EPSP synthase family. Monomer.

It is found in the cytoplasm. The enzyme catalyses 3-phosphoshikimate + phosphoenolpyruvate = 5-O-(1-carboxyvinyl)-3-phosphoshikimate + phosphate. It participates in metabolic intermediate biosynthesis; chorismate biosynthesis; chorismate from D-erythrose 4-phosphate and phosphoenolpyruvate: step 6/7. In terms of biological role, catalyzes the transfer of the enolpyruvyl moiety of phosphoenolpyruvate (PEP) to the 5-hydroxyl of shikimate-3-phosphate (S3P) to produce enolpyruvyl shikimate-3-phosphate and inorganic phosphate. This Pseudoalteromonas atlantica (strain T6c / ATCC BAA-1087) protein is 3-phosphoshikimate 1-carboxyvinyltransferase.